Reading from the N-terminus, the 252-residue chain is 5-oxoprolinase subunit A (252 aa).

It belongs to the LamB/PxpA family. As to quaternary structure, forms a complex composed of PxpA, PxpB and PxpC.

The catalysed reaction is 5-oxo-L-proline + ATP + 2 H2O = L-glutamate + ADP + phosphate + H(+). Catalyzes the cleavage of 5-oxoproline to form L-glutamate coupled to the hydrolysis of ATP to ADP and inorganic phosphate. In Mycobacterium marinum (strain ATCC BAA-535 / M), this protein is 5-oxoprolinase subunit A.